The following is a 100-amino-acid chain: Urease subunit gamma (100 aa).

It belongs to the urease gamma subunit family. As to quaternary structure, heterotrimer of UreA (gamma), UreB (beta) and UreC (alpha) subunits. Three heterotrimers associate to form the active enzyme.

The protein resides in the cytoplasm. It carries out the reaction urea + 2 H2O + H(+) = hydrogencarbonate + 2 NH4(+). It functions in the pathway nitrogen metabolism; urea degradation; CO(2) and NH(3) from urea (urease route): step 1/1. This chain is Urease subunit gamma, found in Limosilactobacillus fermentum (Lactobacillus fermentum).